We begin with the raw amino-acid sequence, 131 residues long: Interleukin-13 (131 aa).

An N-terminal signal peptide occupies residues 1-18; it reads MALWLTVVIALTCLGGLA. N38, N48, N56, and N71 each carry an N-linked (GlcNAc...) asparagine glycan. Cystine bridges form between C47/C75 and C63/C89.

Belongs to the IL-4/IL-13 family. As to quaternary structure, interacts with IL13RA2.

It is found in the secreted. Its function is as follows. Cytokine that plays important roles in allergic inflammation and immune response to parasite infection. Synergizes with IL2 in regulating interferon-gamma synthesis. Stimulates B-cell proliferation, and activation of eosinophils, basophils, and mast cells. Plays an important role in controlling IL33 activity by modulating the production of transmembrane and soluble forms of interleukin-1 receptor-like 1/IL1RL1. Displays the capacity to antagonize Th1-driven proinflammatory immune response and downregulates synthesis of many proinflammatory cytokines including IL1, IL6, IL10, IL12 and TNF-alpha through a mechanism that partially involves suppression of NF-kappa-B. Also functions on nonhematopoietic cells, including endothelial cells where it induces vascular cell adhesion protein 1/VCAM1, which is important in the recruitment of eosinophils. Exerts its biological effects through its receptors which comprises the IL4R chain and the IL13RA1 chain, to activate JAK1 and TYK2, leading to the activation of STAT6. Aside from IL13RA1, another receptor IL13RA2 acts as a high affinity decoy for IL13 and mediates internalization and depletion of extracellular IL13. In Canis lupus familiaris (Dog), this protein is Interleukin-13 (IL13).